The primary structure comprises 103 residues: Large ribosomal subunit protein bL21 (103 aa).

This sequence belongs to the bacterial ribosomal protein bL21 family. As to quaternary structure, part of the 50S ribosomal subunit. Contacts protein L20.

Its function is as follows. This protein binds to 23S rRNA in the presence of protein L20. The sequence is that of Large ribosomal subunit protein bL21 from Paraburkholderia phymatum (strain DSM 17167 / CIP 108236 / LMG 21445 / STM815) (Burkholderia phymatum).